The sequence spans 361 residues: Phospho-N-acetylmuramoyl-pentapeptide-transferase (361 aa).

Transmembrane regions (helical) follow at residues 27–47, 72–92, 98–118, 135–155, 169–189, 200–220, 240–260, 263–283, 289–309, and 338–358; these read GAFF…INLL, TPTM…LLWA, YVWL…MDDF, LAMG…LHPE, TLIN…AGSA, GLAI…AYAV, IFVF…YNAP, AVFM…AIAV, IVLV…IIQV, and QIVI…LATL.

The protein belongs to the glycosyltransferase 4 family. MraY subfamily. Requires Mg(2+) as cofactor.

It is found in the cell inner membrane. It carries out the reaction UDP-N-acetyl-alpha-D-muramoyl-L-alanyl-gamma-D-glutamyl-meso-2,6-diaminopimeloyl-D-alanyl-D-alanine + di-trans,octa-cis-undecaprenyl phosphate = di-trans,octa-cis-undecaprenyl diphospho-N-acetyl-alpha-D-muramoyl-L-alanyl-D-glutamyl-meso-2,6-diaminopimeloyl-D-alanyl-D-alanine + UMP. Its pathway is cell wall biogenesis; peptidoglycan biosynthesis. In terms of biological role, catalyzes the initial step of the lipid cycle reactions in the biosynthesis of the cell wall peptidoglycan: transfers peptidoglycan precursor phospho-MurNAc-pentapeptide from UDP-MurNAc-pentapeptide onto the lipid carrier undecaprenyl phosphate, yielding undecaprenyl-pyrophosphoryl-MurNAc-pentapeptide, known as lipid I. This is Phospho-N-acetylmuramoyl-pentapeptide-transferase from Dinoroseobacter shibae (strain DSM 16493 / NCIMB 14021 / DFL 12).